The following is a 1026-amino-acid chain: uncharacterized protein (1026 aa).

WD repeat units follow at residues 14 to 53 (LLDEGLDVSSIHCFDQYLIVGQCSGQVMVFDVSTDNHFTL), 62 to 104 (HSVS…RRAT), 148 to 187 (GHEDWPILFPFKDEALLIPVAYSDGSVSLWSVDWSALTFK), and 937 to 977 (NAEC…VKFL).

It localises to the cytoplasm. Its subcellular location is the nucleus. This is an uncharacterized protein from Schizosaccharomyces pombe (strain 972 / ATCC 24843) (Fission yeast).